Consider the following 233-residue polypeptide: EEF1A lysine methyltransferase 2 (233 aa).

This sequence belongs to the class I-like SAM-binding methyltransferase superfamily. EFM4 family.

It localises to the cytoplasm. It is found in the nucleus. It carries out the reaction L-lysyl-[protein] + 3 S-adenosyl-L-methionine = N(6),N(6),N(6)-trimethyl-L-lysyl-[protein] + 3 S-adenosyl-L-homocysteine + 3 H(+). Functionally, protein-lysine methyltransferase that selectively catalyzes the trimethylation of EEF1A at 'Lys-318'. The protein is EEF1A lysine methyltransferase 2 of Danio rerio (Zebrafish).